The chain runs to 368 residues: E3 ubiquitin-protein ligase makorin (368 aa).

2 consecutive C3H1-type zinc fingers follow at residues S2–N29 and D30–V57. The disordered stretch occupies residues S58–P81. The segment covering S69–S78 has biased composition (low complexity). The C3H1-type 3 zinc finger occupies P147–L174. Residues C175 to H202 are makorin-type Cys-His. The segment at C216 to R274 adopts an RING-type zinc-finger fold. The segment at K303–R332 adopts a C3H1-type 4 zinc-finger fold.

Expressed in primary roots and leaves. Detected in vascular bundle tissues.

It catalyses the reaction S-ubiquitinyl-[E2 ubiquitin-conjugating enzyme]-L-cysteine + [acceptor protein]-L-lysine = [E2 ubiquitin-conjugating enzyme]-L-cysteine + N(6)-ubiquitinyl-[acceptor protein]-L-lysine.. Its pathway is protein modification; protein ubiquitination. Functionally, E3 ubiquitin ligase catalyzing the covalent attachment of ubiquitin moieties onto substrate proteins. The protein is E3 ubiquitin-protein ligase makorin (MKRN) of Oryza sativa subsp. japonica (Rice).